A 387-amino-acid polypeptide reads, in one-letter code: Double C2-like domain-containing protein gamma (387 aa).

2 C2 domains span residues 83–209 and 243–376; these read ALGT…DICL and ERGR…ELWH. Asp-274, Asp-280, Asp-334, Asp-336, and Asp-342 together coordinate Ca(2+).

It depends on Ca(2+) as a cofactor.

Its function is as follows. May be involved in regulation of vesicular trafficking. In vitro, does not bind calcium and phospholipids. The polypeptide is Double C2-like domain-containing protein gamma (Doc2g) (Mus musculus (Mouse)).